Consider the following 213-residue polypeptide: Large ribosomal subunit protein uL3 (213 aa).

The protein belongs to the universal ribosomal protein uL3 family. In terms of assembly, part of the 50S ribosomal subunit. Forms a cluster with proteins L14 and L19.

Its function is as follows. One of the primary rRNA binding proteins, it binds directly near the 3'-end of the 23S rRNA, where it nucleates assembly of the 50S subunit. The sequence is that of Large ribosomal subunit protein uL3 from Desulforudis audaxviator (strain MP104C).